A 1100-amino-acid polypeptide reads, in one-letter code: MAPPSEETPLISQRSCSLSSSEAGALHVLLPPRGPGPPQRLSFSFGDYLAEDLCVRAAKACGILPVYHSLFALATEDLSCWFPPSHIFSIEDVDTQVLVYRLRFYFPGWFGLETCHRFGLHKDLTSAILDVHVLEHLFAQHRSDLVSGRLPVGLSLKDQGEFLSLAVLDLAQMARKQAQRPGELLKSVSYKACLPPSLRDLIQGQSFVTRRRIRRTVVQALRRVVACQADRYALMAKYILDLERLHPAATTESFLVGLPGAQEEPGCLRVTGDNGIAWSSKDQELFQTFCDFPEIVDVSIKQAPRVGPAGEHRLVTITRMDGHILEAEFPGLPEALSFVALVDGYFRLICDSRHFFCKEVAPPRLLEEEAELCHGPITLDFAIHKLKAAGSLPGSYILRRSPQDYDSFLLTACVQTPLGPDYKGCLIRQDPSGAFSLVGLSQLHRSLQELLTACWHSGLQVDGTALNLTSCCVPRPKEKSNLIVVRRGRNPTPAPGHSPSCCALTKLSFHTIPADSLEWHENLGHGSFTKIFHGHRREVVDGETHDTEVLLKVMDSRHQNCMESFLEAASLMSQVSYPHLVLLHGVCMAGDSIMVQEFVYLGAIDTYLRKRGHLVPASWKLQVTKQLAYALNYLEDKGLPHGNVSARKVLLAREGVDGNPPFIKLSDPGVSPTVLSLEMLTDRIPWVAPECLQEAGTLNLEADKWGFGATTWEVFSGAPMHITSLEPAKKLKFYEDRGQLPALKWTELEGLIAQCMAYDPGRRPSFRAILRDLNGLITSDYELLSDPTPGIPNPRDELCGGAQLYACQDPAIFEERHLKYISLLGKGNFGSVELCRYDPLGDNTGPLVAVKQLQHSGPEQQRDFQREIQILKALHCDFIVKYRGVSYGPGRQSLRLVMEYLPSGCLRDFLQRHRARLHNDRLLLFAWQICKGMEYLGARRCVHRDLAARNILVESEAHVKIADFGLAKLLPLGKDYYVVREPGQSPIFWYAPESLSDNIFSRQSDVWSFGVVLYELFTYSDKSCSPSTEFLRMMGPEREGSPLCHLLELLAEGRRLPPPSTCPTEVQELMQLCWSPNPQDRPAFDTLSPQLDALWRGSPG.

The cytokine/interferon/growth hormone receptors stretch occupies residues 1–223 (MAPPSEETPL…RRTVVQALRR (223 aa)). Residue Ser17 is modified to Phosphoserine. The 330-residue stretch at 24–353 (GALHVLLPPR…GYFRLICDSR (330 aa)) folds into the FERM domain. The SH2; atypical domain maps to 372-472 (LCHGPITLDF…GTALNLTSCC (101 aa)). In terms of domain architecture, Protein kinase 1 spans 517–777 (LEWHENLGHG…AILRDLNGLI (261 aa)). Tyr781 is subject to Phosphotyrosine; by autocatalysis. The Protein kinase 2 domain occupies 818–1091 (LKYISLLGKG…PAFDTLSPQL (274 aa)). Residues 824–832 (LGKGNFGSV) and Lys851 contribute to the ATP site. Phosphotyrosine is present on residues Tyr900 and Tyr935. Asp945 acts as the Proton acceptor in catalysis. Phosphotyrosine; by autocatalysis is present on residues Tyr976 and Tyr977.

Belongs to the protein kinase superfamily. Tyr protein kinase family. JAK subfamily. Interacts with STAM2 and MYO18A. Interacts with SHB. Interacts with CD69. Autophosphorylated, leading to regulate its activity. IL2 promotes phosphorylation on tyrosine residues, including autophosphorylation on Tyr-781. Dephosphorylation of Tyr-976 and Tyr-977 by PTPN2 negatively regulates cytokine-mediated signaling. In contrast with the ubiquitous expression of the other JAKs, JAK3 is predominantly expressed in hematopoietic tissues.

It localises to the endomembrane system. The protein localises to the cytoplasm. It catalyses the reaction L-tyrosyl-[protein] + ATP = O-phospho-L-tyrosyl-[protein] + ADP + H(+). Its function is as follows. Non-receptor tyrosine kinase involved in various processes such as cell growth, development, or differentiation. Mediates essential signaling events in both innate and adaptive immunity and plays a crucial role in hematopoiesis during T-cells development. In the cytoplasm, plays a pivotal role in signal transduction via its association with type I receptors sharing the common subunit gamma such as IL2R, IL4R, IL7R, IL9R, IL15R and IL21R. Following ligand binding to cell surface receptors, phosphorylates specific tyrosine residues on the cytoplasmic tails of the receptor, creating docking sites for STATs proteins. Subsequently, phosphorylates the STATs proteins once they are recruited to the receptor. Phosphorylated STATs then form homodimer or heterodimers and translocate to the nucleus to activate gene transcription. For example, upon IL2R activation by IL2, JAK1 and JAK3 molecules bind to IL2R beta (IL2RB) and gamma chain (IL2RG) subunits inducing the tyrosine phosphorylation of both receptor subunits on their cytoplasmic domain. Then, STAT5A and STAT5B are recruited, phosphorylated and activated by JAK1 and JAK3. Once activated, dimerized STAT5 translocates to the nucleus and promotes the transcription of specific target genes in a cytokine-specific fashion. This Rattus norvegicus (Rat) protein is Tyrosine-protein kinase JAK3.